A 376-amino-acid polypeptide reads, in one-letter code: Erythronate-4-phosphate dehydrogenase (376 aa).

S45 and T67 together coordinate substrate. Residue D147 participates in NAD(+) binding. R209 is a catalytic residue. D233 contacts NAD(+). The active site involves E238. The active-site Proton donor is H255. Residue G258 participates in NAD(+) binding. Y259 provides a ligand contact to substrate.

This sequence belongs to the D-isomer specific 2-hydroxyacid dehydrogenase family. PdxB subfamily. As to quaternary structure, homodimer.

The protein resides in the cytoplasm. The enzyme catalyses 4-phospho-D-erythronate + NAD(+) = (R)-3-hydroxy-2-oxo-4-phosphooxybutanoate + NADH + H(+). Its pathway is cofactor biosynthesis; pyridoxine 5'-phosphate biosynthesis; pyridoxine 5'-phosphate from D-erythrose 4-phosphate: step 2/5. Its function is as follows. Catalyzes the oxidation of erythronate-4-phosphate to 3-hydroxy-2-oxo-4-phosphonooxybutanoate. This chain is Erythronate-4-phosphate dehydrogenase, found in Shewanella baltica (strain OS185).